We begin with the raw amino-acid sequence, 236 residues long: Ribonuclease HII (236 aa).

One can recognise an RNase H type-2 domain in the interval 21 to 214; the sequence is RTVAGVDEVG…LDALPRWQHL (194 aa). Residues Asp27, Glu28, and Asp119 each contribute to the a divalent metal cation site.

The protein belongs to the RNase HII family. Requires Mn(2+) as cofactor. Mg(2+) serves as cofactor.

The protein resides in the cytoplasm. The catalysed reaction is Endonucleolytic cleavage to 5'-phosphomonoester.. Functionally, endonuclease that specifically degrades the RNA of RNA-DNA hybrids. The sequence is that of Ribonuclease HII from Streptomyces griseus subsp. griseus (strain JCM 4626 / CBS 651.72 / NBRC 13350 / KCC S-0626 / ISP 5235).